The following is a 356-amino-acid chain: Tyrosine recombinase XerS (356 aa).

One can recognise a Core-binding (CB) domain in the interval 16–121 (LMPWYVLEYY…ALSSLYKYLT (106 aa)). One can recognise a Tyr recombinase domain in the interval 169–354 (GFLTYIDQEH…VNDEQKNALD (186 aa)). Catalysis depends on residues R210, K234, H306, R309, and H332. Catalysis depends on Y341, which acts as the O-(3'-phospho-DNA)-tyrosine intermediate.

Belongs to the 'phage' integrase family. XerS subfamily.

It localises to the cytoplasm. With respect to regulation, ftsK is required for recombination. Its function is as follows. Site-specific tyrosine recombinase, which acts by catalyzing the cutting and rejoining of the recombining DNA molecules. Essential to convert dimers of the bacterial chromosome into monomers to permit their segregation at cell division. The polypeptide is Tyrosine recombinase XerS (Streptococcus pneumoniae serotype 19F (strain G54)).